We begin with the raw amino-acid sequence, 316 residues long: Lys-63-specific deubiquitinase BRCC36 (316 aa).

Position 2 is an N-acetylalanine (Ala-2). The 168-residue stretch at Val-12–Gln-179 folds into the MPN domain. 3 residues coordinate Zn(2+): His-122, His-124, and Asp-135. The JAMM motif signature appears at His-122 to Asp-135. Position 258 is a phosphoserine (Ser-258).

This sequence belongs to the peptidase M67A family. BRCC36 subfamily. As to quaternary structure, component of the ARISC complex, at least composed of UIMC1/RAP80, ABRAXAS1, BRCC3/BRCC36, BABAM2 and BABAM1/NBA1. Component of the BRCA1-A complex, at least composed of BRCA1, BARD1, UIMC1/RAP80, ABRAXAS1, BRCC3/BRCC36, BABAM2 and BABAM1/NBA1. In the BRCA1-A complex, interacts directly with ABRAXAS1 and BABAM2. Component of the BRISC complex, at least composed of ABRAXAS2, BRCC3/BRCC36, BABAM2 and BABAM1/NBA1. Identified in a complex with SHMT2 and the other subunits of the BRISC complex. In the BRISC complex, interacts directly with ABRAXAS2. Identified in a complex with ABRAXAS2 and NUMA1. The BRISC complex interacts with the CSN complex. Component of the BRCA1/BRCA2 containing complex (BRCC), which also contains BRCA1, BRCA2, BARD1, BABAM2 and RAD51. BRCC is a ubiquitin E3 ligase complex that enhances cellular survival following DNA damage. Interacts with BRCA1. Binds polyubiquitin. Interacts with PWWP2B. Interacts with HDAC1; this interaction is enhanced in the presence of PWWP2B. Requires Zn(2+) as cofactor.

It localises to the nucleus. Its subcellular location is the cytoplasm. It is found in the cytoskeleton. The protein resides in the spindle pole. In terms of biological role, metalloprotease that specifically cleaves 'Lys-63'-linked polyubiquitin chains. Does not have activity toward 'Lys-48'-linked polyubiquitin chains. Component of the BRCA1-A complex, a complex that specifically recognizes 'Lys-63'-linked ubiquitinated histones H2A and H2AX at DNA lesions sites, leading to target the BRCA1-BARD1 heterodimer to sites of DNA damage at double-strand breaks (DSBs). In the BRCA1-A complex, it specifically removes 'Lys-63'-linked ubiquitin on histones H2A and H2AX, antagonizing the RNF8-dependent ubiquitination at double-strand breaks (DSBs). Catalytic subunit of the BRISC complex, a multiprotein complex that specifically cleaves 'Lys-63'-linked ubiquitin in various substrates. Mediates the specific 'Lys-63'-specific deubiquitination associated with the COP9 signalosome complex (CSN), via the interaction of the BRISC complex with the CSN complex. The BRISC complex is required for normal mitotic spindle assembly and microtubule attachment to kinetochores via its role in deubiquitinating NUMA1. Plays a role in interferon signaling via its role in the deubiquitination of the interferon receptor IFNAR1; deubiquitination increases IFNAR1 activity by enhancing its stability and cell surface expression. Acts as a regulator of the NLRP3 inflammasome by mediating deubiquitination of NLRP3, leading to NLRP3 inflammasome assembly. Down-regulates the response to bacterial lipopolysaccharide (LPS) via its role in IFNAR1 deubiquitination. Deubiquitinates HDAC1 and PWWP2B leading to their stabilization. The polypeptide is Lys-63-specific deubiquitinase BRCC36 (BRCC3) (Bos taurus (Bovine)).